The primary structure comprises 506 residues: MSQADADITPFFADDNEGEGPVENGVGSPLPEDEEEESPSGVTDRRAIMTVIVLCYINLLNYMDRFTVAGVLPDIEHFFGIGDGTSGLLQTVFICSYMFLAPLFGYLGDRYNRKLIMCVGIFFWSVVTLASSFIGKDHFWALLLTRGLVGVGEASYSTIAPTIIADLFVKEKRTNMLSIFYFAIPVGSGMGYIVGSKVDTVAKDWHWALRVTPGLGLLAVFLLMLVVQEPKRGAIEAHPEHTLHRTSWLADMKALCRNPSFILSTFGFTAVAFVTGSLALWAPAFLFRAGVFTGVKQPCFKAPCDDSDSLIFGAITVVTGILGVASGVQASKLLRTRTPRADPLVCAAGLLLAAPFLYLSIMFAQASTVATYVFIFLGETFLSMNWAIVADILLYVVIPTRRSTAEAFQIVLSHLLGDAISPYLIGVVSDSIKESNSYMWEFRSLQMSLLLCSFVAVAGGAFFLATAVFIEKDRDLAENYVPSDDAPIVVPRSGRSTKVSVSSVLI.

The interval M1–V42 is disordered. The span at P21 to L30 shows a compositional bias: low complexity. Helical transmembrane passes span I52–V71, G87–L107, L115–G135, V149–V169, M176–S196, W207–V227, F266–L286, L310–A330, L344–A364, V373–L393, F408–V428, and L450–I470.

Belongs to the major facilitator superfamily. Spinster (TC 2.A.1.49) family. As to expression, expressed in yolk cells.

The protein resides in the lysosome membrane. It catalyses the reaction a 1-acyl-sn-glycero-3-phosphocholine(out) + H(+)(out) = a 1-acyl-sn-glycero-3-phosphocholine(in) + H(+)(in). It carries out the reaction a 1-acyl-sn-glycero-3-phosphoethanolamine(out) + H(+)(out) = a 1-acyl-sn-glycero-3-phosphoethanolamine(in) + H(+)(in). The catalysed reaction is a 1-O-(1Z-alkenyl)-sn-glycero-3-phosphocholine(out) + H(+)(out) = a 1-O-(1Z-alkenyl)-sn-glycero-3-phosphocholine(in) + H(+)(in). The enzyme catalyses a 1-O-(1Z-alkenyl)-sn-glycero-3-phosphoethanolamine(out) + H(+)(out) = a 1-O-(1Z-alkenyl)-sn-glycero-3-phosphoethanolamine(in) + H(+)(in). In terms of biological role, mediates the rate-limiting, proton-dependent, lysosomal efflux of lysophospholipids. Selective for zwitterionic headgroups such as lysophosphatidylcholine (LPC) and lysophosphatidylethanolamine (LPE). Essential player in lysosomal homeostasis. Critical for embryogenesis. Involved in the regulation of developmental senescence. The chain is Protein spinster homolog 1 (spns1) from Danio rerio (Zebrafish).